Consider the following 420-residue polypeptide: MNNQSLSLIETLSRDAATAAQTLAVLDEQTKNTVLLDMAKSLRASTAEILAANQQDLTRAEEDNLGSAMLDRLLLTPERIEAMAQGIETIVSLPDPVGITRDLSERPNGIKIRKMRIPLGVVCMIYEARPNVTADAGALCFKSGNAVVLRGGKEALQSSLVIAKVLQAVLQQHKLPKALITVIPDPDRGLMMELMQQRAYIDVIIPRGGEGLINFVTDNSKIPVIQHFKGVCHLYVDKDADLDNAMALLLNGKTQRTGVCNALEGLIVHQDVAEAFLSKAAVELASHKVKINACSRAAKYFTGCTVLDDSEFGQEYLDLEIAIRIVDDFDHAIDHIRAFGSHHTEVISTKNDATAMRFQRTVDASVVMVNASSRFSDGGELGLGAEIGIATSKLHAYGPMGLESLTAEKYLVNGTGQVRS.

It belongs to the gamma-glutamyl phosphate reductase family.

Its subcellular location is the cytoplasm. The enzyme catalyses L-glutamate 5-semialdehyde + phosphate + NADP(+) = L-glutamyl 5-phosphate + NADPH + H(+). The protein operates within amino-acid biosynthesis; L-proline biosynthesis; L-glutamate 5-semialdehyde from L-glutamate: step 2/2. In terms of biological role, catalyzes the NADPH-dependent reduction of L-glutamate 5-phosphate into L-glutamate 5-semialdehyde and phosphate. The product spontaneously undergoes cyclization to form 1-pyrroline-5-carboxylate. The polypeptide is Gamma-glutamyl phosphate reductase (Shewanella denitrificans (strain OS217 / ATCC BAA-1090 / DSM 15013)).